A 439-amino-acid polypeptide reads, in one-letter code: MERKEKDHLNLVVIGHVDSGKSTTTGHLIYKLGGIDERTLAKLEEKALELNKASFKYAFVLDNLKAEQERGITINCALRQFDTPSRSYTIIDAPGHKDFIKNMITGTSQADAAVLIIAAKKGEFEDGFSREGSTKDHALLAYTMGIKQAIVAINKMDTIDYDEERFNEIVENVSDHLGKIGYKKENVKYIPISGFDGDNMLEQSENLPWYKGPTLTEALDEFKVPKRPIKKPLRVPIQDVYKIAGIGTVPVGRVETGVLKRGMEVQFTTGATSEVKSLEAHHNKLEEAEPGLNVGFNVRLEAKEIKAGHVCGDAKNDPPKNAESFIAQVIVMNHPGHIKAGYQPVLDIHTAHVATKFKTLLSKNEARTGKLIEEAPKFLKNGESGIVELVPTKPLCVEEFSKYAALGRFVIRDMKRTVAVGVIQEVIHKKETKKKASKR.

The tr-type G domain occupies Lys6–Ile229. The tract at residues Gly15–Ser22 is G1. Position 15–22 (Gly15–Ser22) interacts with GTP. The interval Gly71–Asn75 is G2. A G3 region spans residues Asp92 to Gly95. Residues Asp92 to His96 and Asn154 to Asp157 each bind GTP. Residues Asn154–Asp157 are G4. The tract at residues Ser193–Phe195 is G5.

Belongs to the TRAFAC class translation factor GTPase superfamily. Classic translation factor GTPase family. EF-Tu/EF-1A subfamily.

It localises to the cytoplasm. In terms of biological role, this protein promotes the GTP-dependent binding of aminoacyl-tRNA to the A-site of ribosomes during protein biosynthesis. The chain is Elongation factor 1-alpha 2 (EFA2) from Euplotes crassus.